The primary structure comprises 813 residues: Valine--tRNA ligase (813 aa).

The 'HIGH' region signature appears at Pro46–His56. A 'KMSKS' region motif is present at residues Lys536–Ser540. Lys539 is an ATP binding site.

Belongs to the class-I aminoacyl-tRNA synthetase family. ValS type 2 subfamily. As to quaternary structure, monomer.

The protein localises to the cytoplasm. The enzyme catalyses tRNA(Val) + L-valine + ATP = L-valyl-tRNA(Val) + AMP + diphosphate. In terms of biological role, catalyzes the attachment of valine to tRNA(Val). As ValRS can inadvertently accommodate and process structurally similar amino acids such as threonine, to avoid such errors, it has a 'posttransfer' editing activity that hydrolyzes mischarged Thr-tRNA(Val) in a tRNA-dependent manner. This Rickettsia canadensis (strain McKiel) protein is Valine--tRNA ligase.